The following is a 3206-amino-acid chain: MSTLVCQAVAAPVWSNGARTRRIRDADGEYRCTQCDMGFDSMTMARPVNHCCDGIMIDEYNLYDDDPIMHLVDSKTPIKRGSQETEGDGMAAEAIKVTGAEPVNCFMVGTIKCKINENSIVAKGVMAAIPRQLTQDEVFMRKARLQAAVAKSTIEREEKERQFAFSKLEEKLRARREKLKDGIVIKTRKGLEWREATPNQQRGKLQSTSFDASGGKTLTPHTIYCKTKSSKFSNGGVKCATSKKMRTVRKPQSLKMKTESIDVLIEQVMTIAGKHAKQVTLIDKQKTNRVWIRRVNGVRLLQVETKHHKGIISQKDASLNNLTKRVARHFARKTAYIHPSDSITHGHSGVVFLRANISGSKSYSIDDLFVVRGKRNGKLMESRNKVAWRKMFQIDHFSIVGIKIWNAFDAEYVKLRDESVSDHDCVGGITPEECGILAAQILRVFYPCWRITCTKCISNWLSKPTSEQIEHIYERGNLAIQDLNKRIPSAHHVTQMVELLRQRIKNTTFDMGNNTKVHELIGHRQDGVFRHLNRLNNSILAANGSSTIEWESMNESLLELARWHNKRTESIASGGISSFRNKISAKAQINFALMCDNQLDTNGNFVWGERGYHAKRFFSEFFTKIDPKDGYSHHTVRATPTGVRHLAIGNLIIPGDLQKLREKLEGVSITAVGISEKCVSRRNGDFVYPCSCVTSENGKPVLSDVILPTRNHLVIGNTGDPKLVDLPKTETGRMWIAKEGYCYINIFFAMLVNVSEKDAKDFTKFVRDEIMPQLGKWPTMMDVATACYKLAIIYPDVRDAQLPRILVDHSEQIFHVIDSYGSMTTGYHILKAGTVSQLISFAHGALLGEMKMYRVGGTQKMEINMCCCQRKNLLIKQLIRAIYRPKLLTEIIETEPFVLMLAIVSPSILKAMFRSGTFNQAIKFYMHRSKPTAQTLAFLEALSERVSRSRVLSEQFNIIDGALKELKSLANMSMRTQHTYPIVQNQLDIMIERVSADAELLRDGFVVSKGRVQALIEKNYQDDLRNSFTDLPYVQQLQQTMSFSRVKHGFGELCESKDLSFSKEAWMGHLSSFSAGGKQIIRLARTKSQQMLASGGRRVTLAARNITMRMVTATFSEIMKFVNMLLVLSMIFKLWKQANTLLEEREKDKWEKFDRSQNELRRQLRYTLWRFEAQEGRQVTREEFFDYLKYNEGIENRHELINELIANQPLFSIQAKKHGEIRFEQTVALMALLAMMFGSDRSDAVFSTLSKVRTIFTTMAQEVRCQSIDDIHDVFDEKKATIDFELATDQPAQVQMDKTFCEWWQNQMEQNRTVPHYRTGGKFIEFTRSNAASVANEIAHTPDFSEYLIRGAVGSGKSTGLPCYLSAKGRVLLLEPTRPLTENVCAQLRGSPFHKSPSMSMRNGHTFGSTPIHVMTTGYALHFFCNNVERIREYDFVIFDECHVIDSSAMSFYCALKEYSYQGKILKVSATPPGREVEFKTQFPVTIATEDSLSFDQFVQAQGSGANCDILKKGHNILVYVSSYNEVDRLSKLLVDRGFKVTKVDGRTMKLGGVEINTSGTAEKPHFIVATNIIENGVTLDIDVVVDFGVKVVAELDADARTMRYNKQAISYGERIQRLGRVGRLKDGHALRIGHTEKGITEIPVAIAVESAFQCFAYGLPVMTSNVSTSIIGNCTVKQARTMMNFELSPFFTVELVKYNGTMHPEIHKILVPYKLRDSSMQLCKEAIPNSGVSRWHTAHEYISHGIVLETLKSDVRIPFYLKGVPEKVYEKIWNAVCVFKSDSGFGRMSTASACNVAYTLKTDPLSITRTIAHIDALLIEEQEKKSQFDLMSSHVTNSSSISLAGLVNRLRSKWMVDHSGENIVKLQNARSQLLEFRGMDINLDDVESFRKFGCAETVRCQSKSEVSKTLQLKGKWNKPLITSDFFVVCMVSIGCVVLMYQIFMAKWNEPVKLEGKSKAKTLRFRQARDNNAKYEVFADEDTKRHYFGEAYTKKGKKSGKARGMGVKTKKFVNVYGFDPCEYSLVRFVDPLTGLTYDRHPMEHMMDVQETIGDDRREAMWNDELDKQLFVTRPTIEAYYIKDKTTPALKIDLNPHNPMRVCDKAETIAGFPEREFELRQSGSATLVPYSEVPVQNEKQEFDEEHVRTEAASLHFGLRDYNPIAQAVCRITNTGVDYDRSIFGIGFGQFLITNAHCFKLNEGETRIVSRHGQFTIEKTHSLPIHQVKDKDMVIVRLPKDFPPFPQRLQFRAPQEREKICLVGSNFQEKSIQSVITESCMTFKHNGGKYWKHWITTKEGHCGLPAVALKDGHIVGIHNLGGENTNINYFTPFDADILDKYLLNAEALQWTKGWKYNKNKVCWGGLELLDDNEPEESGLFRMVKLLKSLEEDGVRTQSRDDAWLEKEIKGSLKVVARCPGQLVTKHVVKGPCAMFQLYLELHEDAKSFFTPRMGSYGKSRLSKGAFIKDIMKYSSNTVVGNVDCDVFENAIDNVEKILWKAGMMQCEYVTDAEAIFQSLNMNAAVGAMYQGKKKDYFEDFTAADRELIVKQSCERLFLGKKGVWNGSLKAELRPIEKVHENKTRTFTAAPLDTLLGGKVCVDDFNNFFYSCHLRGPWTVGITKFYAGWNEFLSKLPDGWLYCDADGSRFDSSLTPYLINAVLELRLRFMEEWDAGEQMLKNLYTEIIYTPIATPDGSVIKKTKGNNSGQPSTVVDNTLMVILAMQYSLQLLGVDFETQDEVVRYFANGDDLLIAVRPDCEFVLKGLEIHFSNLGLNYNFSARHHDKKDVWFMSTRGILRDGILIPKLEEERIVAILEWDRSREFSHRLDAICAAMIEAWGYDELLQHIRKFYYWLLEQEPYRSIAQEGKAPYIAETALRHLYTNAMATQSELEKYTEAINQHYNDEGGDGSIKVRLQAGDETKDDERRRKEEEDRKKREESIDASQFGSNRDNKKNKNKESDTPNKLIVKSDRDVDAGSSGTITVPRLEKISAKIRMPKHKGGVAISLQHLVDYNPAQVDISNTRATQSQFDNWWRAVSQEYGVGDNEMQVLASGLMVWCIENGTSPNINGMWTMMDGEEQVEYPLKPVMDNARPTFRQIMAHFSDVAEAYIEKRNSTEVYIPRYALQRNLRDPSLARYGFDFYEITAKTPVRAREAHFQMKAAAIRGKSNSLFGLDGNVGTQEENTERHTAEDVNQNMHNLLGMRAM.

The 143-residue stretch at Lys-255 to Phe-397 folds into the Peptidase S30 domain. Active-site for P1 proteinase activity residues include His-307, Asp-316, and Ser-348. The Involved in interaction with stylet and aphid transmission motif lies at Arg-450–Cys-453. Residues Pro-708 to Arg-710 carry the Involved in virions binding and aphid transmission motif. Positions Met-734–Gly-856 constitute a Peptidase C6 domain. Catalysis depends on for helper component proteinase activity residues Cys-742 and His-815. The region spanning Ile-1338–Glu-1490 is the Helicase ATP-binding domain. Gly-1351–Ser-1358 is an ATP binding site. The DECH box signature appears at Asp-1440–His-1443. The Helicase C-terminal domain occupies Ser-1494–Ser-1668. The Nuclear localization signal signature appears at Lys-1994–Lys-2001. Tyr-2016 is modified (O-(5'-phospho-RNA)-tyrosine). One can recognise a Peptidase C4 domain in the interval Ala-2150–Asp-2368. Residues His-2195, Asp-2230, and Cys-2300 each act as for nuclear inclusion protein A activity in the active site. Residues Trp-2637–Leu-2761 form the RdRp catalytic domain. The segment at His-2900–Gly-2979 is disordered. Composition is skewed to basic and acidic residues over residues Ala-2916–Ser-2939 and Arg-2949–Asp-2974.

It belongs to the potyviridae genome polyprotein family. Interacts with host eIF4E protein (via cap-binding region); this interaction mediates the translation of the VPg-viral RNA conjugates. Part of a complex that comprises VPg, RNA, host EIF4E and EIF4G; this interaction mediates the translation of the VPg-viral RNA conjugates. Post-translationally, VPg is uridylylated by the polymerase and is covalently attached to the 5'-end of the genomic RNA. This uridylylated form acts as a nucleotide-peptide primer for the polymerase. In terms of processing, potyviral RNA is expressed as two polyproteins which undergo post-translational proteolytic processing. Genome polyprotein is processed by NIa-pro, P1 and HC-pro proteinases resulting in the production of at least ten individual proteins. P3N-PIPO polyprotein is cleaved by P1 and HC-pro proteinases resulting in the production of three individual proteins. The P1 proteinase and the HC-pro cleave only their respective C-termini autocatalytically. 6K1 is essential for proper proteolytic separation of P3 from CI.

Its subcellular location is the host cytoplasmic vesicle. The protein localises to the host nucleus. It is found in the virion. The catalysed reaction is RNA(n) + a ribonucleoside 5'-triphosphate = RNA(n+1) + diphosphate. It catalyses the reaction Hydrolyzes glutaminyl bonds, and activity is further restricted by preferences for the amino acids in P6 - P1' that vary with the species of potyvirus, e.g. Glu-Xaa-Xaa-Tyr-Xaa-Gln-|-(Ser or Gly) for the enzyme from tobacco etch virus. The natural substrate is the viral polyprotein, but other proteins and oligopeptides containing the appropriate consensus sequence are also cleaved.. It carries out the reaction Hydrolyzes a Gly-|-Gly bond at its own C-terminus, commonly in the sequence -Tyr-Xaa-Val-Gly-|-Gly, in the processing of the potyviral polyprotein.. Its function is as follows. Required for aphid transmission and also has proteolytic activity. Only cleaves a Gly-Gly dipeptide at its own C-terminus. Interacts with virions and aphid stylets. Acts as a suppressor of RNA-mediated gene silencing, also known as post-transcriptional gene silencing (PTGS), a mechanism of plant viral defense that limits the accumulation of viral RNAs. May have RNA-binding activity. Has helicase activity. It may be involved in replication. In terms of biological role, indispensable for virus replication. Functionally, mediates the cap-independent, EIF4E-dependent translation of viral genomic RNAs. Binds to the cap-binding site of host EIF4E and thus interferes with the host EIF4E-dependent mRNA export and translation. VPg-RNA directly binds EIF4E and is a template for transcription. Also forms trimeric complexes with EIF4E-EIF4G, which are templates for translation. Its function is as follows. Has RNA-binding and proteolytic activities. An RNA-dependent RNA polymerase that plays an essential role in the virus replication. In terms of biological role, involved in aphid transmission, cell-to-cell and systemis movement, encapsidation of the viral RNA and in the regulation of viral RNA amplification. The protein is Genome polyprotein of Pisum sativum (Garden pea).